Consider the following 94-residue polypeptide: Large ribosomal subunit protein bL25 (94 aa).

Positions Met-1–Leu-20 are disordered.

It belongs to the bacterial ribosomal protein bL25 family. As to quaternary structure, part of the 50S ribosomal subunit; part of the 5S rRNA/L5/L18/L25 subcomplex. Contacts the 5S rRNA. Binds to the 5S rRNA independently of L5 and L18.

Its function is as follows. This is one of the proteins that binds to the 5S RNA in the ribosome where it forms part of the central protuberance. This is Large ribosomal subunit protein bL25 from Pasteurella multocida (strain Pm70).